The chain runs to 537 residues: Chaperonin GroEL (537 aa).

ATP contacts are provided by residues 29–32 (TLGP), 86–90 (DGTTT), Gly413, 477–479 (NAA), and Asp493.

Belongs to the chaperonin (HSP60) family. In terms of assembly, forms a cylinder of 14 subunits composed of two heptameric rings stacked back-to-back. Interacts with the co-chaperonin GroES.

Its subcellular location is the cytoplasm. It carries out the reaction ATP + H2O + a folded polypeptide = ADP + phosphate + an unfolded polypeptide.. Together with its co-chaperonin GroES, plays an essential role in assisting protein folding. The GroEL-GroES system forms a nano-cage that allows encapsulation of the non-native substrate proteins and provides a physical environment optimized to promote and accelerate protein folding. This is Chaperonin GroEL from Bifidobacterium animalis subsp. lactis (strain AD011).